Here is a 550-residue protein sequence, read N- to C-terminus: Cytokinin dehydrogenase 10 (550 aa).

The N-terminal stretch at 1 to 26 (MMPRAQLTTFLIVTSFLSTVPYLRAP) is a signal peptide. The FAD-binding PCMH-type domain maps to 64 to 245 (VHATPNGVFR…TRARIRLEPA (182 aa)). Positions 100, 101, and 102 each coordinate FAD. At His103 the chain carries Pros-8alpha-FAD histidine. The FAD site is built by Ser104, Gln108, Asp169, Thr174, Ser180, Ile184, and Ile235. N-linked (GlcNAc...) asparagine glycosylation occurs at Asn289. 3 residues coordinate FAD: Tyr489, Ser524, and Gln527. The disordered stretch occupies residues 523–550 (LSPGQGIFPPPPPPSPPPPAAGEPITAS). Residues 530 to 543 (FPPPPPPSPPPPAA) are compositionally biased toward pro residues.

It belongs to the oxygen-dependent FAD-linked oxidoreductase family. In terms of assembly, monomer. FAD is required as a cofactor.

The protein resides in the secreted. The protein localises to the extracellular space. The enzyme catalyses N(6)-dimethylallyladenine + A + H2O = 3-methyl-2-butenal + adenine + AH2. In terms of biological role, catalyzes the oxidation of cytokinins, a family of N(6)-substituted adenine derivatives that are plant hormones, where the substituent is an isopentenyl group. The sequence is that of Cytokinin dehydrogenase 10 (CKX10) from Oryza sativa subsp. japonica (Rice).